Here is a 90-residue protein sequence, read N- to C-terminus: Guanine nucleotide-binding protein subunit gamma (90 aa).

Cys-86 carries S-palmitoyl cysteine lipidation. Residue Cys-87 is modified to Cysteine methyl ester. Cys-87 carries the S-farnesyl cysteine lipid modification. Residues 88–90 (CIM) constitute a propeptide, removed in mature form.

Belongs to the G protein gamma family. As to quaternary structure, g proteins are composed of 3 units, alpha, beta and gamma.

Its subcellular location is the membrane. The sequence is that of Guanine nucleotide-binding protein subunit gamma from Eremothecium gossypii (strain ATCC 10895 / CBS 109.51 / FGSC 9923 / NRRL Y-1056) (Yeast).